A 726-amino-acid polypeptide reads, in one-letter code: uncharacterized protein (726 aa).

Residues 10-135 (MRISWVVAFI…LLDFVETHLN (126 aa)) form the Thioredoxin domain. Disordered regions lie at residues 133-153 (HLNP…TDED) and 227-280 (VTSV…NPTG). Over residues 138–153 (TDPDIPSDEDVLTDED) the composition is skewed to acidic residues. Residues 675–695 (IRVLYMVLGIVTVGILVWYFS) form a helical membrane-spanning segment. Position 708 is a phosphoserine (Ser-708).

The protein localises to the membrane. This is an uncharacterized protein from Schizosaccharomyces pombe (strain 972 / ATCC 24843) (Fission yeast).